Reading from the N-terminus, the 153-residue chain is 6,7-dimethyl-8-ribityllumazine synthase (153 aa).

5-amino-6-(D-ribitylamino)uracil is bound by residues Phe21, Ala55–Glu57, and Cys79–Ile81. Ala84–Thr85 lines the (2S)-2-hydroxy-3-oxobutyl phosphate pocket. Residue His87 is the Proton donor of the active site. Phe112 is a 5-amino-6-(D-ribitylamino)uracil binding site. Arg126 provides a ligand contact to (2S)-2-hydroxy-3-oxobutyl phosphate.

This sequence belongs to the DMRL synthase family. In terms of assembly, forms an icosahedral capsid composed of 60 subunits, arranged as a dodecamer of pentamers.

It catalyses the reaction (2S)-2-hydroxy-3-oxobutyl phosphate + 5-amino-6-(D-ribitylamino)uracil = 6,7-dimethyl-8-(1-D-ribityl)lumazine + phosphate + 2 H2O + H(+). The protein operates within cofactor biosynthesis; riboflavin biosynthesis; riboflavin from 2-hydroxy-3-oxobutyl phosphate and 5-amino-6-(D-ribitylamino)uracil: step 1/2. Catalyzes the formation of 6,7-dimethyl-8-ribityllumazine by condensation of 5-amino-6-(D-ribitylamino)uracil with 3,4-dihydroxy-2-butanone 4-phosphate. This is the penultimate step in the biosynthesis of riboflavin. This is 6,7-dimethyl-8-ribityllumazine synthase from Staphylococcus epidermidis (strain ATCC 35984 / DSM 28319 / BCRC 17069 / CCUG 31568 / BM 3577 / RP62A).